The sequence spans 371 residues: uncharacterized protein (371 aa).

3 Solcar repeats span residues 3-98, 131-276, and 284-369; these read DDSL…CKVL, RYWG…FKSF, and KSNF…VRKW. A run of 6 helical transmembrane segments spans residues 9–29, 73–93, 137–157, 253–273, 290–310, and 341–362; these read AIAG…LDVV, GVGP…VVYE, IFSA…IWVV, LFPS…YEYF, VLAA…HEVL, and YYSG…TFLS.

This sequence belongs to the mitochondrial carrier (TC 2.A.29) family.

The protein resides in the mitochondrion inner membrane. This is an uncharacterized protein from Schizosaccharomyces pombe (strain 972 / ATCC 24843) (Fission yeast).